The sequence spans 186 residues: Cell division protein ZapC (186 aa).

The protein belongs to the ZapC family. Interacts directly with FtsZ.

The protein resides in the cytoplasm. Its function is as follows. Contributes to the efficiency of the cell division process by stabilizing the polymeric form of the cell division protein FtsZ. Acts by promoting interactions between FtsZ protofilaments and suppressing the GTPase activity of FtsZ. This is Cell division protein ZapC from Musicola paradisiaca (strain Ech703) (Dickeya paradisiaca).